The sequence spans 255 residues: Small ribosomal subunit protein eS4 (255 aa).

The 73-residue stretch at 43-115 (IPLLILVRDV…PTRFFTLHPI (73 aa)) folds into the S4 RNA-binding domain.

The protein belongs to the eukaryotic ribosomal protein eS4 family.

The chain is Small ribosomal subunit protein eS4 from Hyperthermus butylicus (strain DSM 5456 / JCM 9403 / PLM1-5).